Here is a 342-residue protein sequence, read N- to C-terminus: Autoinducer 2 import system permease protein LsrC (342 aa).

Over M1–A13 the chain is Periplasmic. The chain crosses the membrane as a helical span at residues L14–V34. The Cytoplasmic portion of the chain corresponds to Q35–T38. A helical transmembrane segment spans residues M39–L59. At T60–S69 the chain is on the periplasmic side. Residues I70–V90 traverse the membrane as a helical segment. Residues A91–C92 are Cytoplasmic-facing. Residues V93–L113 traverse the membrane as a helical segment. Residue K114 is a topological domain, periplasmic. Residues I115 to W135 form a helical membrane-spanning segment. Over T136–P154 the chain is Cytoplasmic. The chain crosses the membrane as a helical span at residues L155 to W175. Topologically, residues L176–S212 are periplasmic. Residues L213–P233 form a helical membrane-spanning segment. Over N234 to G251 the chain is Cytoplasmic. A helical membrane pass occupies residues G252 to L272. Over T273–R283 the chain is Periplasmic. The helical transmembrane segment at I284–D304 threads the bilayer. The Cytoplasmic portion of the chain corresponds to G305–A342.

It belongs to the binding-protein-dependent transport system permease family. AraH/RbsC subfamily. As to quaternary structure, the complex is composed of two ATP-binding proteins (LsrA), two transmembrane proteins (LsrC and LsrD) and a solute-binding protein (LsrB).

It localises to the cell inner membrane. In terms of biological role, part of the ABC transporter complex LsrABCD involved in autoinducer 2 (AI-2) import. Probably responsible for the translocation of the substrate across the membrane. The polypeptide is Autoinducer 2 import system permease protein LsrC (lsrC) (Escherichia coli O9:H4 (strain HS)).